The following is a 229-amino-acid chain: 7-cyano-7-deazaguanine synthase (229 aa).

9-19 contacts ATP; the sequence is YSGGLDSTTCM. 4 residues coordinate Zn(2+): cysteine 189, cysteine 199, cysteine 202, and cysteine 205.

The protein belongs to the QueC family. It depends on Zn(2+) as a cofactor.

The catalysed reaction is 7-carboxy-7-deazaguanine + NH4(+) + ATP = 7-cyano-7-deazaguanine + ADP + phosphate + H2O + H(+). It functions in the pathway purine metabolism; 7-cyano-7-deazaguanine biosynthesis. Its function is as follows. Catalyzes the ATP-dependent conversion of 7-carboxy-7-deazaguanine (CDG) to 7-cyano-7-deazaguanine (preQ(0)). The chain is 7-cyano-7-deazaguanine synthase from Geotalea daltonii (strain DSM 22248 / JCM 15807 / FRC-32) (Geobacter daltonii).